Reading from the N-terminus, the 966-residue chain is Glycine dehydrogenase (decarboxylating) (966 aa).

Lys713 bears the N6-(pyridoxal phosphate)lysine mark.

This sequence belongs to the GcvP family. In terms of assembly, the glycine cleavage system is composed of four proteins: P, T, L and H. It depends on pyridoxal 5'-phosphate as a cofactor.

The catalysed reaction is N(6)-[(R)-lipoyl]-L-lysyl-[glycine-cleavage complex H protein] + glycine + H(+) = N(6)-[(R)-S(8)-aminomethyldihydrolipoyl]-L-lysyl-[glycine-cleavage complex H protein] + CO2. Its function is as follows. The glycine cleavage system catalyzes the degradation of glycine. The P protein binds the alpha-amino group of glycine through its pyridoxal phosphate cofactor; CO(2) is released and the remaining methylamine moiety is then transferred to the lipoamide cofactor of the H protein. In Shewanella halifaxensis (strain HAW-EB4), this protein is Glycine dehydrogenase (decarboxylating).